An 81-amino-acid polypeptide reads, in one-letter code: Photosystem I iron-sulfur center (81 aa).

4Fe-4S ferredoxin-type domains are found at residues 2–31 (AHAV…MIPW) and 39–68 (IASA…VRVY). The [4Fe-4S] cluster site is built by C11, C14, C17, C21, C48, C51, C54, and C58.

As to quaternary structure, the eukaryotic PSI reaction center is composed of at least 11 subunits. [4Fe-4S] cluster serves as cofactor.

The protein localises to the plastid. Its subcellular location is the chloroplast thylakoid membrane. It carries out the reaction reduced [plastocyanin] + hnu + oxidized [2Fe-2S]-[ferredoxin] = oxidized [plastocyanin] + reduced [2Fe-2S]-[ferredoxin]. In terms of biological role, apoprotein for the two 4Fe-4S centers FA and FB of photosystem I (PSI); essential for photochemical activity. FB is the terminal electron acceptor of PSI, donating electrons to ferredoxin. The C-terminus interacts with PsaA/B/D and helps assemble the protein into the PSI complex. Required for binding of PsaD and PsaE to PSI. PSI is a plastocyanin-ferredoxin oxidoreductase, converting photonic excitation into a charge separation, which transfers an electron from the donor P700 chlorophyll pair to the spectroscopically characterized acceptors A0, A1, FX, FA and FB in turn. The polypeptide is Photosystem I iron-sulfur center (Marchantia polymorpha (Common liverwort)).